The chain runs to 97 residues: Cobalt transport protein CbiN (97 aa).

The next 2 membrane-spanning stretches (helical) occupy residues 6 to 26 (VLMI…YSGL) and 68 to 88 (SLLF…FFGY).

It belongs to the CbiN family. Forms an energy-coupling factor (ECF) transporter complex composed of an ATP-binding protein (A component, CbiO), a transmembrane protein (T component, CbiQ) and 2 possible substrate-capture proteins (S components, CbiM and CbiN) of unknown stoichimetry.

It is found in the cell membrane. It participates in cofactor biosynthesis; adenosylcobalamin biosynthesis. Its function is as follows. Part of the energy-coupling factor (ECF) transporter complex CbiMNOQ involved in cobalt import. The polypeptide is Cobalt transport protein CbiN (Methanococcus maripaludis (strain C6 / ATCC BAA-1332)).